A 428-amino-acid polypeptide reads, in one-letter code: Serine--tRNA ligase (428 aa).

235–237 (TAE) is a binding site for L-serine. 266–268 (RSE) serves as a coordination point for ATP. Glu-289 is an L-serine binding site. Residue 353-356 (EISS) coordinates ATP. Ser-389 is a binding site for L-serine.

It belongs to the class-II aminoacyl-tRNA synthetase family. Type-1 seryl-tRNA synthetase subfamily. In terms of assembly, homodimer. The tRNA molecule binds across the dimer.

It localises to the cytoplasm. The enzyme catalyses tRNA(Ser) + L-serine + ATP = L-seryl-tRNA(Ser) + AMP + diphosphate + H(+). It catalyses the reaction tRNA(Sec) + L-serine + ATP = L-seryl-tRNA(Sec) + AMP + diphosphate + H(+). The protein operates within aminoacyl-tRNA biosynthesis; selenocysteinyl-tRNA(Sec) biosynthesis; L-seryl-tRNA(Sec) from L-serine and tRNA(Sec): step 1/1. Catalyzes the attachment of serine to tRNA(Ser). Is also able to aminoacylate tRNA(Sec) with serine, to form the misacylated tRNA L-seryl-tRNA(Sec), which will be further converted into selenocysteinyl-tRNA(Sec). The sequence is that of Serine--tRNA ligase from Shewanella sp. (strain W3-18-1).